A 224-amino-acid chain; its full sequence is Retinoschisin (224 aa).

Positions 1–23 (MSRKIEGFLLLLLFGYEATLGLS) are cleaved as a signal peptide. The F5/8 type C domain occupies 63–219 (CPYHKPLGFE…IAIRMELLEC (157 aa)). Cystine bridges form between cysteine 63–cysteine 219 and cysteine 110–cysteine 142.

In terms of assembly, homooctamer of 4 homodimers; disulfide-linked. The homooctamer has a flat, cogwheel structure with a diameter of about 14 nm. Two stacked octamers can assemble to form a hexadecamer. As to expression, restricted to the retina (at protein level). Detected in the inner segment of the photoreceptors, the inner nuclear layer, the inner plexiform layer and the ganglion cell layer (at protein level). At the macula, expressed in both the outer and inner nuclear layers and in the inner plexiform layer (at protein level). Detected in retina. Detected only within the photoreceptor cell layer, most prominently within the inner segments of the photoreceptors. Undetectable in the inner plexiform layers and the inner nuclear layer.

The protein localises to the secreted. It localises to the cell membrane. Binds negatively charged membrane lipids, such as phosphatidylserine and phosphoinositides. May play a role in cell-cell adhesion processes in the retina, via homomeric interaction between octamers present on the surface of two neighboring cells. Required for normal structure and function of the retina. The sequence is that of Retinoschisin (RS1) from Homo sapiens (Human).